We begin with the raw amino-acid sequence, 255 residues long: tRNA pseudouridine synthase A (255 aa).

Asp52 functions as the Nucleophile in the catalytic mechanism. A substrate-binding site is contributed by Tyr111.

The protein belongs to the tRNA pseudouridine synthase TruA family. In terms of assembly, homodimer.

The enzyme catalyses uridine(38/39/40) in tRNA = pseudouridine(38/39/40) in tRNA. In terms of biological role, formation of pseudouridine at positions 38, 39 and 40 in the anticodon stem and loop of transfer RNAs. The polypeptide is tRNA pseudouridine synthase A (Cereibacter sphaeroides (strain ATCC 17029 / ATH 2.4.9) (Rhodobacter sphaeroides)).